The sequence spans 20 residues: Alpha-conotoxin-like ts14a (20 aa).

2 cysteine pairs are disulfide-bonded: C3/C16 and C14/C20.

In terms of tissue distribution, expressed by the venom duct.

The protein resides in the secreted. Alpha-conotoxins act on postsynaptic membranes, they bind to the nicotinic acetylcholine receptors (nAChR) and thus inhibit them. The chain is Alpha-conotoxin-like ts14a from Conus tessulatus (Tessellate cone).